The following is a 79-amino-acid chain: Acyl carrier protein 1 (79 aa).

The 76-residue stretch at 2 to 77 (DNIEQRVKKI…QAIDYARANV (76 aa)) folds into the Carrier domain. Serine 37 bears the O-(pantetheine 4'-phosphoryl)serine mark.

This sequence belongs to the acyl carrier protein (ACP) family. 4'-phosphopantetheine is transferred from CoA to a specific serine of apo-ACP by AcpS. This modification is essential for activity because fatty acids are bound in thioester linkage to the sulfhydryl of the prosthetic group.

The protein resides in the cytoplasm. It participates in lipid metabolism; fatty acid biosynthesis. In terms of biological role, carrier of the growing fatty acid chain in fatty acid biosynthesis. This Ralstonia nicotianae (strain ATCC BAA-1114 / GMI1000) (Ralstonia solanacearum) protein is Acyl carrier protein 1.